The primary structure comprises 448 residues: Homogentisate 1,2-dioxygenase (448 aa).

His303 (proton acceptor) is an active-site residue. Fe cation contacts are provided by His346 and Glu352. Homogentisate contacts are provided by Tyr361 and His382. Fe cation is bound at residue His382.

It belongs to the homogentisate dioxygenase family. Hexamer; dimer of trimers. Requires Fe cation as cofactor.

The enzyme catalyses homogentisate + O2 = 4-maleylacetoacetate + H(+). It participates in amino-acid degradation; L-phenylalanine degradation; acetoacetate and fumarate from L-phenylalanine: step 4/6. Involved in the catabolism of homogentisate (2,5-dihydroxyphenylacetate or 2,5-OH-PhAc), a central intermediate in the degradation of phenylalanine and tyrosine. Catalyzes the oxidative ring cleavage of the aromatic ring of homogentisate to yield maleylacetoacetate. In Nitrobacter hamburgensis (strain DSM 10229 / NCIMB 13809 / X14), this protein is Homogentisate 1,2-dioxygenase.